We begin with the raw amino-acid sequence, 892 residues long: DNA mismatch repair protein MutS (892 aa).

634 to 641 (GPNMGGKS) provides a ligand contact to ATP.

This sequence belongs to the DNA mismatch repair MutS family.

In terms of biological role, this protein is involved in the repair of mismatches in DNA. It is possible that it carries out the mismatch recognition step. This protein has a weak ATPase activity. This Paraburkholderia phymatum (strain DSM 17167 / CIP 108236 / LMG 21445 / STM815) (Burkholderia phymatum) protein is DNA mismatch repair protein MutS.